Reading from the N-terminus, the 125-residue chain is Small ribosomal subunit protein uS13 (125 aa).

Basic residues predominate over residues 94-116; it reads GLPVRGQRTRTNARTRKGPRKAV. A disordered region spans residues 94–125; that stretch reads GLPVRGQRTRTNARTRKGPRKAVRASSAKAGR.

This sequence belongs to the universal ribosomal protein uS13 family. Part of the 30S ribosomal subunit. Forms a loose heterodimer with protein S19. Forms two bridges to the 50S subunit in the 70S ribosome.

In terms of biological role, located at the top of the head of the 30S subunit, it contacts several helices of the 16S rRNA. In the 70S ribosome it contacts the 23S rRNA (bridge B1a) and protein L5 of the 50S subunit (bridge B1b), connecting the 2 subunits; these bridges are implicated in subunit movement. Contacts the tRNAs in the A and P-sites. This is Small ribosomal subunit protein uS13 from Nitrosospira multiformis (strain ATCC 25196 / NCIMB 11849 / C 71).